A 22-amino-acid polypeptide reads, in one-letter code: Putative lactoylglutathione lyase (22 aa).

The disordered stretch occupies residues 1–22 (ITACLDPDGWKEPGPLPGISTK). Glutamate 12 serves as the catalytic Proton donor/acceptor.

Belongs to the glyoxalase I family. It depends on Zn(2+) as a cofactor.

It catalyses the reaction (R)-S-lactoylglutathione = methylglyoxal + glutathione. It participates in secondary metabolite metabolism; methylglyoxal degradation; (R)-lactate from methylglyoxal: step 1/2. Catalyzes the conversion of hemimercaptal, formed from methylglyoxal and glutathione, to S-lactoylglutathione. This Pinus strobus (Eastern white pine) protein is Putative lactoylglutathione lyase.